A 587-amino-acid chain; its full sequence is Tripartite motif-containing protein 29 (587 aa).

The disordered stretch occupies residues 1–71; it reads MEGADACRSN…SGEGKSGLFS (71 aa). Serine 21, serine 28, serine 58, and serine 104 each carry phosphoserine. Position 106 is a phosphotyrosine (tyrosine 106). The B box-type zinc finger occupies 220–260; that stretch reads FEARKCPLHGKTMELFCQTDQTCICYLCMFQEHKNHSTVTV. Zn(2+)-binding residues include cysteine 225, histidine 228, cysteine 247, and histidine 252. Residues 259-348 adopt a coiled-coil conformation; it reads TVEEAKAEKE…AVDQVKVIVD (90 aa). Threonine 476 is modified (phosphothreonine). The residue at position 489 (serine 489) is a Phosphoserine.

Interacts with VIM and HINT1. Interacts with IKBKG/NEMO. Interacts with STING1.

It is found in the cytoplasm. The protein localises to the lysosome. Plays a crucial role in the regulation of macrophage activation in response to viral or bacterial infections within the respiratory tract. Mechanistically, TRIM29 interacts with IKBKG/NEMO in the lysosome where it induces its 'Lys-48' ubiquitination and subsequent degradation. In turn, the expression of type I interferons and the production of pro-inflammatory cytokines are inhibited. Additionally, induces the 'Lys-48' ubiquitination of STING1 in a similar way, leading to its degradation. The sequence is that of Tripartite motif-containing protein 29 (Trim29) from Mus musculus (Mouse).